The sequence spans 1053 residues: Serine/threonine-protein phosphatase 6 regulatory ankyrin repeat subunit A (1053 aa).

ANK repeat units follow at residues 40 to 69 (EKRT…RVNA), 73 to 102 (KWLT…DVNA), 106 to 135 (NWQT…NVNV), 139 to 168 (AGRT…NINA), 172 to 201 (KDRR…EVTC), 205 to 234 (KSYT…DMNE), 238 to 267 (YGNT…NVNQ), 271 to 301 (KGFT…DVNM), 305 to 334 (DGKT…VIDC), 338 to 367 (NGNT…DTAK), 371 to 400 (HGMF…DIDT), 404 to 433 (FGRT…DFNK), 437 to 466 (FGRS…SVND), 470 to 500 (RGCT…NPGI), 504 to 534 (QGYN…DVLM), 549 to 578 (ATIS…DLDV), 582 to 611 (SGRT…SILV), 616 to 645 (LKRT…PQNA), 652 to 681 (NGQT…NVDA), 685 to 714 (WGRT…KCLL), 718 to 747 (RGRT…SVDA), 755 to 786 (HGYT…KIDG), 788 to 817 (AFSP…SIVN), 822 to 851 (KGRT…QVNS), 855 to 885 (TGKT…DLTL), 889 to 918 (SKNT…DRNL), and 925 to 954 (ALQT…SVLA). A phosphoserine mark is found at Ser-1007 and Ser-1011.

As to quaternary structure, protein phosphatase 6 (PP6) holoenzyme is proposed to be a heterotrimeric complex formed by the catalytic subunit, a SAPS domain-containing subunit (PP6R) and an ankyrin repeat-domain containing regulatory subunit (ARS). Interacts with PPP1C and HNRPK. Interacts with PPP6C, PPP6R1 and PPP6R3. In terms of processing, ubiquitinated by the ECS(RAB40C) complex leading to its degradation and decreased PP6 activity. In terms of tissue distribution, widely expressed (at protein level).

It is found in the nucleus. It localises to the nucleoplasm. The protein localises to the cytoplasm. Its subcellular location is the cytosol. The protein resides in the cell projection. It is found in the lamellipodium. Its function is as follows. Putative regulatory subunit of protein phosphatase 6 (PP6) that may be involved in the recognition of phosphoprotein substrates. Involved in the PP6-mediated dephosphorylation of NFKBIE opposing its degradation in response to TNF-alpha. Selectively inhibits the phosphatase activity of PPP1C. Targets PPP1C to modulate HNRPK phosphorylation. Involved in the PP6-mediated dephosphorylation of MOB1 and induced focal adhesion assembly during cell migration. The protein is Serine/threonine-protein phosphatase 6 regulatory ankyrin repeat subunit A (Ankrd28) of Mus musculus (Mouse).